Here is a 267-residue protein sequence, read N- to C-terminus: 2-keto-3-deoxy-L-rhamnonate aldolase (267 aa).

His-49 acts as the Proton acceptor in catalysis. Residue Gln-151 participates in substrate binding. Glu-153 is a binding site for Mg(2+). Positions 178 and 179 each coordinate substrate. Asp-179 is a Mg(2+) binding site.

Belongs to the HpcH/HpaI aldolase family. KDR aldolase subfamily. Homohexamer. Mg(2+) is required as a cofactor.

The enzyme catalyses 2-dehydro-3-deoxy-L-rhamnonate = (S)-lactaldehyde + pyruvate. Catalyzes the reversible retro-aldol cleavage of 2-keto-3-deoxy-L-rhamnonate (KDR) to pyruvate and lactaldehyde. The polypeptide is 2-keto-3-deoxy-L-rhamnonate aldolase (Escherichia coli (strain UTI89 / UPEC)).